The chain runs to 138 residues: ATP synthase epsilon chain (138 aa).

This sequence belongs to the ATPase epsilon chain family. F-type ATPases have 2 components, CF(1) - the catalytic core - and CF(0) - the membrane proton channel. CF(1) has five subunits: alpha(3), beta(3), gamma(1), delta(1), epsilon(1). CF(0) has three main subunits: a, b and c.

It is found in the cell inner membrane. Functionally, produces ATP from ADP in the presence of a proton gradient across the membrane. The protein is ATP synthase epsilon chain of Verminephrobacter eiseniae (strain EF01-2).